We begin with the raw amino-acid sequence, 284 residues long: Bifunctional protein FolD (284 aa).

NADP(+) is bound by residues glycine 164–glycine 166, threonine 189, and isoleucine 230.

Belongs to the tetrahydrofolate dehydrogenase/cyclohydrolase family. Homodimer.

The enzyme catalyses (6R)-5,10-methylene-5,6,7,8-tetrahydrofolate + NADP(+) = (6R)-5,10-methenyltetrahydrofolate + NADPH. The catalysed reaction is (6R)-5,10-methenyltetrahydrofolate + H2O = (6R)-10-formyltetrahydrofolate + H(+). It participates in one-carbon metabolism; tetrahydrofolate interconversion. Functionally, catalyzes the oxidation of 5,10-methylenetetrahydrofolate to 5,10-methenyltetrahydrofolate and then the hydrolysis of 5,10-methenyltetrahydrofolate to 10-formyltetrahydrofolate. The chain is Bifunctional protein FolD from Pelotomaculum thermopropionicum (strain DSM 13744 / JCM 10971 / SI).